Reading from the N-terminus, the 374-residue chain is Chaperone protein DnaJ (374 aa).

The J domain maps to 5-70 (DYYEVLGLEK…DKKANYDRFG (66 aa)). The segment at 137–219 (GVEKSINITR…CHGAGHVRKK (83 aa)) adopts a CR-type zinc-finger fold. Positions 150, 153, 167, 170, 193, 196, 207, and 210 each coordinate Zn(2+). 4 CXXCXGXG motif repeats span residues 150–157 (CETCGGTG), 167–174 (CDKCGGTG), 193–200 (CDKCGGRG), and 207–214 (CHECHGAG).

Belongs to the DnaJ family. In terms of assembly, homodimer. The cofactor is Zn(2+).

Its subcellular location is the cytoplasm. Functionally, participates actively in the response to hyperosmotic and heat shock by preventing the aggregation of stress-denatured proteins and by disaggregating proteins, also in an autonomous, DnaK-independent fashion. Unfolded proteins bind initially to DnaJ; upon interaction with the DnaJ-bound protein, DnaK hydrolyzes its bound ATP, resulting in the formation of a stable complex. GrpE releases ADP from DnaK; ATP binding to DnaK triggers the release of the substrate protein, thus completing the reaction cycle. Several rounds of ATP-dependent interactions between DnaJ, DnaK and GrpE are required for fully efficient folding. Also involved, together with DnaK and GrpE, in the DNA replication of plasmids through activation of initiation proteins. This chain is Chaperone protein DnaJ, found in Clostridium acetobutylicum (strain ATCC 824 / DSM 792 / JCM 1419 / IAM 19013 / LMG 5710 / NBRC 13948 / NRRL B-527 / VKM B-1787 / 2291 / W).